Here is a 722-residue protein sequence, read N- to C-terminus: Putative tyrosine-protein kinase in cps region (722 aa).

Helical transmembrane passes span 31-53 and 427-449; these read IIIALTSFATLIALLYAFFATPI and IVVLAGLFIGLVISVSLVLVRIL.

The protein belongs to the etk/wzc family. In terms of processing, autophosphorylated on tyrosine residue(s).

The protein resides in the cell inner membrane. It catalyses the reaction L-tyrosyl-[protein] + ATP = O-phospho-L-tyrosyl-[protein] + ADP + H(+). Its pathway is glycan metabolism; exopolysaccharide biosynthesis. The chain is Putative tyrosine-protein kinase in cps region from Klebsiella pneumoniae.